The sequence spans 389 residues: Chalcone synthase 9 (389 aa).

The active site involves Cys164.

Belongs to the thiolase-like superfamily. Chalcone/stilbene synthases family.

It catalyses the reaction (E)-4-coumaroyl-CoA + 3 malonyl-CoA + 3 H(+) = 2',4,4',6'-tetrahydroxychalcone + 3 CO2 + 4 CoA. It functions in the pathway secondary metabolite biosynthesis; flavonoid biosynthesis. In terms of biological role, the primary product of this enzyme is 4,2',4',6'-tetrahydroxychalcone (also termed naringenin-chalcone or chalcone) which can under specific conditions spontaneously isomerize into naringenin. This Medicago sativa (Alfalfa) protein is Chalcone synthase 9 (CHS9).